The chain runs to 377 residues: Putative glutamate--cysteine ligase 2 (377 aa).

It belongs to the glutamate--cysteine ligase type 2 family. YbdK subfamily.

It catalyses the reaction L-cysteine + L-glutamate + ATP = gamma-L-glutamyl-L-cysteine + ADP + phosphate + H(+). ATP-dependent carboxylate-amine ligase which exhibits weak glutamate--cysteine ligase activity. In Pseudomonas aeruginosa (strain LESB58), this protein is Putative glutamate--cysteine ligase 2.